We begin with the raw amino-acid sequence, 393 residues long: Na(+)/H(+) antiporter NhaA (393 aa).

Helical transmembrane passes span 24–44 (GGLV…SPLA), 58–78 (LSLL…LVGL), 96–116 (ILPG…YILF), 126–146 (GWAI…SLFG), 155–175 (IFLA…IALF), 178–198 (SDLN…LYGM), 214–234 (AVLW…GVLL), 267–287 (VAFI…FSGV), 300–320 (VAAG…FLLV), 338–358 (GVAA…LLAF), and 369–389 (MGIL…LATF).

This sequence belongs to the NhaA Na(+)/H(+) (TC 2.A.33) antiporter family.

It localises to the cell inner membrane. It catalyses the reaction Na(+)(in) + 2 H(+)(out) = Na(+)(out) + 2 H(+)(in). In terms of biological role, na(+)/H(+) antiporter that extrudes sodium in exchange for external protons. This is Na(+)/H(+) antiporter NhaA from Rhizobium etli (strain ATCC 51251 / DSM 11541 / JCM 21823 / NBRC 15573 / CFN 42).